The chain runs to 260 residues: 5-oxoprolinase subunit A 2 (260 aa).

Belongs to the LamB/PxpA family. Forms a complex composed of PxpA, PxpB and PxpC.

It carries out the reaction 5-oxo-L-proline + ATP + 2 H2O = L-glutamate + ADP + phosphate + H(+). Catalyzes the cleavage of 5-oxoproline to form L-glutamate coupled to the hydrolysis of ATP to ADP and inorganic phosphate. The protein is 5-oxoprolinase subunit A 2 of Ralstonia nicotianae (strain ATCC BAA-1114 / GMI1000) (Ralstonia solanacearum).